We begin with the raw amino-acid sequence, 828 residues long: DNA gyrase subunit A (828 aa).

Positions 32–497 constitute a Topo IIA-type catalytic domain; that stretch reads LPDVRDGLKP…EVLSLEDEDL (466 aa). Tyrosine 120 functions as the O-(5'-phospho-DNA)-tyrosine intermediate in the catalytic mechanism. Residues 524-530 carry the GyrA-box motif; the sequence is QKRGGRG.

Belongs to the type II topoisomerase GyrA/ParC subunit family. Heterotetramer, composed of two GyrA and two GyrB chains. In the heterotetramer, GyrA contains the active site tyrosine that forms a transient covalent intermediate with DNA, while GyrB binds cofactors and catalyzes ATP hydrolysis.

Its subcellular location is the cytoplasm. It catalyses the reaction ATP-dependent breakage, passage and rejoining of double-stranded DNA.. Functionally, a type II topoisomerase that negatively supercoils closed circular double-stranded (ds) DNA in an ATP-dependent manner to modulate DNA topology and maintain chromosomes in an underwound state. Negative supercoiling favors strand separation, and DNA replication, transcription, recombination and repair, all of which involve strand separation. Also able to catalyze the interconversion of other topological isomers of dsDNA rings, including catenanes and knotted rings. Type II topoisomerases break and join 2 DNA strands simultaneously in an ATP-dependent manner. The protein is DNA gyrase subunit A of Streptococcus pyogenes serotype M1.